A 439-amino-acid polypeptide reads, in one-letter code: Large ribosomal subunit protein mL44 (439 aa).

2 disordered regions span residues 39-73 (QSTA…SLPS) and 247-282 (KAME…YGNP). Over residues 247-257 (KAMEEQDQDKT) the composition is skewed to basic and acidic residues. Positions 258–274 (PDEEEAEMVANEQDQDV) are enriched in acidic residues.

This sequence belongs to the ribonuclease III family. Mitochondrion-specific ribosomal protein mL44 subfamily. Component of the mitochondrial large ribosomal subunit (mt-LSU). Mature N.crassa 74S mitochondrial ribosomes consist of a small (37S) and a large (54S) subunit. The 37S small subunit contains a 16S ribosomal RNA (16S mt-rRNA) and 32 different proteins. The 54S large subunit contains a 23S rRNA (23S mt-rRNA) and 42 different proteins. mL44 forms a heterodimer with mL57 and stabilizes rRNA expansion segments 1/2 at a membrane-facing protuberance close to the point of attachment of the ribosome to the translocon in the membrane.

The protein localises to the mitochondrion. In terms of biological role, component of the mitochondrial ribosome (mitoribosome), a dedicated translation machinery responsible for the synthesis of mitochondrial genome-encoded proteins, including at least some of the essential transmembrane subunits of the mitochondrial respiratory chain. The mitoribosomes are attached to the mitochondrial inner membrane and translation products are cotranslationally integrated into the membrane. The polypeptide is Large ribosomal subunit protein mL44 (mrpl3) (Neurospora crassa (strain ATCC 24698 / 74-OR23-1A / CBS 708.71 / DSM 1257 / FGSC 987)).